The primary structure comprises 168 residues: Probable chorismate pyruvate-lyase (168 aa).

Arg75, Ile114, and Glu155 together coordinate substrate.

The protein belongs to the UbiC family.

It localises to the cytoplasm. The catalysed reaction is chorismate = 4-hydroxybenzoate + pyruvate. It participates in cofactor biosynthesis; ubiquinone biosynthesis. Functionally, removes the pyruvyl group from chorismate, with concomitant aromatization of the ring, to provide 4-hydroxybenzoate (4HB) for the ubiquinone pathway. This is Probable chorismate pyruvate-lyase from Psychrobacter cryohalolentis (strain ATCC BAA-1226 / DSM 17306 / VKM B-2378 / K5).